Here is a 506-residue protein sequence, read N- to C-terminus: MASSLGGDERSEIAFFDLETAVPTKSGEPFAILEFGAILVCPRRLEELYSYSTLVRPTDLSLISTLTKRRSGITRDGVLSAHTFSEIADKVYDILHGRIWAGHNIIRFDCVRIREAFAEIGLSPPEPKATIDSLSLLSQKFGKRAGDMKMASLATYFGLGDQAHRSLDDVRMNLEVVKYCATVLFLESSVPDILTDMSWFSPRKSPRTRSNGKLVANGVRESSTSSSSSPKTDPSSSSVDATIVKNHPIVSLLTECSESDASSYDIEDPIDITTLIGKLRIGTLQTDAAEEAKTVRQQDESPPSPDSDAKDESFLGVNEVSVSSIRASLVPFYRGSLRMKLFHNDTPLHLCWHSLKVRFGISRKFVDHAGRPKLNIIVDAPLDLCKILDAVDAAAHNLPTDSSTNSDWRPTVIRKEGFANYPTARLHISSESNGDDTLCGTQVYQKEEPLGTNQKLDVSSDNLEKLESALLPGTLVDAFFSLEPYSYQQMAGIRLAVKKLVILLKK.

Residues 15–176 (FFDLETAVPT…LDDVRMNLEV (162 aa)) enclose the Exonuclease domain. The Mg(2+) site is built by Asp17 and Glu19. His164 serves as the catalytic Proton donor/acceptor. Position 169 (Asp169) interacts with Mg(2+). Disordered regions lie at residues 204–240 (KSPRTRSNGKLVANGVRESSTSSSSSPKTDPSSSSVD) and 289–313 (AEEAKTVRQQDESPPSPDSDAKDES). Residues 222-238 (SSTSSSSSPKTDPSSSS) are compositionally biased toward low complexity. Residues 290–299 (EEAKTVRQQD) show a composition bias toward basic and acidic residues.

Mg(2+) serves as cofactor.

Its function is as follows. Probable exonuclease that may be involved in enuclation of sieve elements. The sequence is that of Protein NEN3 (NEN3) from Arabidopsis thaliana (Mouse-ear cress).